The following is a 64-amino-acid chain: MAKNKGVRIVVTLECTECRSSTEKRSQGVSRYTTEKNRRNTTERLELKKFCPHDNKMTIHKEIK.

It belongs to the bacterial ribosomal protein bL33 family.

The protein is Large ribosomal subunit protein bL33 of Synechococcus sp. (strain WH7803).